Here is a 490-residue protein sequence, read N- to C-terminus: POC1 centriolar protein homolog B (490 aa).

7 WD repeats span residues 16–55 (GHKD…RAFR), 58–97 (GHTD…ESTV), 100–139 (AHTA…FLYS), 142–181 (RHTN…CINI), 184–223 (DYGG…LIQH), 226–265 (VHNA…LIYT), and 268–307 (GHKG…LNYR). Polar residues predominate over residues 375-388 (DGASSSRAQFTSGM). A disordered region spans residues 375 to 427 (DGASSSRAQFTSGMDSGPFRTHTQAREEEDENQEERFAGGMTASPAERSGIPS). Residues 431–463 (STLENIVQQLDILTQTVAVLEERLTLTEDKLRT) are a coiled coil.

The protein belongs to the WD repeat POC1 family.

It is found in the cytoplasm. It localises to the cytoskeleton. The protein resides in the microtubule organizing center. Its subcellular location is the centrosome. The protein localises to the centriole. Plays an important role in centriole assembly and/or stability and ciliogenesis. Involved in early steps of centriole duplication, as well as in the later steps of centriole length control. In Danio rerio (Zebrafish), this protein is POC1 centriolar protein homolog B.